The following is a 2395-amino-acid chain: Centrosomal protein of 295 kDa (2395 aa).

The interval 1–540 (MKRKVMNGKL…KQADHLEVRP (540 aa)) is necessary for centriole targeting and microtubule association. Ser-13 is modified (phosphoserine). Coiled coils occupy residues 53–84 (QRRNQQVSHLAEELRAEWEEAQSQKIQNLEKL), 114–148 (AERKTKAEARHKEALKAQKKQKEMLMKQKTRHIKA), 209–277 (DAHL…KRQT), 488–538 (ARHK…HLEV), and 567–592 (QQNRLHKQTVETARKRLLEYQTVLKE). Disordered regions lie at residues 602–643 (LIPD…PVQP), 660–681 (GHIPQRQGETARAKQSVESQER), and 735–764 (SDSQQISSEDSENISSKPTEPSSSLPLMPE). Ser-634 bears the Phosphoserine mark. Residues 735-750 (SDSQQISSEDSENISS) are compositionally biased toward low complexity. Positions 817–848 (GQLELQKKVLQERQEAQEKLLSCTQKELEEQT) form a coiled coil. Disordered stretches follow at residues 864-893 (SLPSASAESGNIQTSSTKSDATVSSDSMDN), 966-986 (ADTQSRKIQKPPLPTNKKGLL), and 1212-1272 (VDPE…SKVT). Positions 1219 to 1250 (FQFSPQTQENRSSQQTGFSSFTPSLRQPSCVS) are enriched in polar residues. A coiled-coil region spans residues 1444–1488 (HDDLQALQQQLDVHREAIRSCQDIQEELLLQRLNKLEQRVSSKQI). Residue Ser-1565 is modified to Phosphoserine. The span at 1677 to 1692 (PWGDSSQGSSSGDQPG) shows a compositional bias: low complexity. 5 disordered regions span residues 1677–1715 (PWGDSSQGSSSGDQPGAAAVHAEHSGESLGKELSGRASK), 1819–1845 (SEEEEEEEACTNLSPLMKPDDEVETQE), 1875–1899 (ESFSEQTEHQEQESSSKEEETGSLS), 1989–2013 (DLSSPGTSQEDRDFYQQNSESSSEK), and 2354–2395 (NKTP…SQCI). Positions 1697 to 1710 (HAEHSGESLGKELS) are enriched in basic and acidic residues. Residues 1880-1894 (QTEHQEQESSSKEEE) show a composition bias toward basic and acidic residues. Residues 2329–2395 (SLGEAFMKRK…TAKRNRSQCI (67 aa)) form an ALMS motif region. The span at 2376-2388 (HLKEAVSGDETAK) shows a compositional bias: basic and acidic residues.

Interacts (via ALMS motif) with microtubules; this interaction is direct.

Its subcellular location is the cytoplasm. It is found in the cytoskeleton. It localises to the microtubule organizing center. The protein localises to the centrosome. The protein resides in the centriole. Its subcellular location is the spindle. Functionally, centriole-enriched microtubule-binding protein involved in centriole biogenesis. Essential for the generation of the distal portion of new-born centrioles in a CPAP- and CEP120-mediated elongation dependent manner during the cell cycle S/G2 phase after formation of the initiating cartwheel structure. Required for the recruitment of centriolar proteins, such as POC1B, POC5 and CEP135, into the distal portion of centrioles. Also required for centriole-to-centrosome conversion during mitotic progression, but is dispensable for cartwheel removal or centriole disengagement. Binds to and stabilizes centriolar microtubule. May be involved in ciliogenesis. The polypeptide is Centrosomal protein of 295 kDa (Rattus norvegicus (Rat)).